The following is a 1123-amino-acid chain: MSTPKKTYSSTSSAKSKAHSVRVAQTTADAALQAVFEKSGDSGDSFDYSKSVSKSTAESLPSGAVTAYLQRMQRGGLTQSFGCMIAVEGTGFRVIAYSENAPEILDLVPQAVPSVGEMDTLRIGTDVRTLFTASSVASLEKAAEAQEMSLLNPITVNCRRSGKQLYAIAHRIDIGIVIDFEAVKTDDHLVSAAGALQSHKLAAKAITRLQALPGGDIGLLCDTVVEEVRELTGYDRVMAYRFHEDEHGEVVAEIRRADLEPYLGLHYPGTDIPQASRFLFMKNKVRIIADCSAPPVKVIQDPTLRQPVSLAGSTLRSPHGCHAQYMGNMGSIASLVMAVIINDNEEDSHGSVQRGRKLWGLVVCHHTSPRTVPFPLRSACGFLMQVFGLQLNMEVELAAQLREKHILRTQTLLCDMLLRDAPIGIVSQIPNIMDLVKCDGAALYYGKRFWLLGTTPTESQIKDIAEWLLEYHKDSTGLSTDSLADANYPAAHLLGDAVCGMAAAKITAKDFLFWFRSHTAKEIKWGGAKHDPGEKDDGRKMHPRSSFKAFLEVVKRRSLPWEDVEMDAIHSLQLILRGSFQDIDDSDTKTMIHARLNDLKLHDMDELSVVANEMVRLIETATAPILAVDSNGMINGWNAKIAQVTGLPVSEAMGRSLVKDLVTDESVAVVERLLYLALRGEEEQNVEIKLKTFGTQTEKGVVILIVNACSSRDVSENVVGVCFVGQDVTGQKMFMDKFTRIQGDYKTIVQNPHPLIPPIFGADEFGYCFEWNPAMEGLTGWKKDEVVGKLLVGEIFGMQMMCCRMKSQDAMTKFMIALNTAMDGQSTDKFTFSFFDREGKYVDVLLSTNKRTNADGVITGVFCFLQIASSELQQALKVQRATEKVAVAKLKELAYIRQEIKNPLCGITFTRQLLEDTDLSDDQQQFLDTSAVCEQQLQKVLNDMDLESIEDGYLELDTAEFEMGTVMNAVISQGMTTSREKGLQIFRETPREINTMRLLGDQIRLQQVLSDFLLNTVRFTPSPEGWVKIKVVPTRKRLGGSVHVVHLEFRVSHPGAGLPEELVLEMYDRGKGMTQEGLGLNMCRKLVRLMNGDVHYVREAMQCYFVVNVELPMAQRDDASSQM.

Residues Met-1–Lys-15 are compositionally biased toward low complexity. The tract at residues Met-1–Ser-20 is disordered. The GAF domain maps to Asp-216–Val-395. Residue Cys-321 coordinates phytochromobilin. PAS domains follow at residues Val-610–Glu-681 and Asp-744–Met-815. Residues Tyr-895–Gln-1115 form the Histidine kinase domain.

This sequence belongs to the phytochrome family. In terms of assembly, homodimer. In terms of processing, contains one covalently linked phytochromobilin chromophore.

The protein resides in the cytoplasm. Regulatory photoreceptor which exists in two forms that are reversibly interconvertible by light: the Pr form that absorbs maximally in the red region of the spectrum and the Pfr form that absorbs maximally in the far-red region. Photoconversion of Pr to Pfr induces an array of morphogenetic responses, whereas reconversion of Pfr to Pr cancels the induction of those responses. Pfr controls the expression of a number of nuclear genes including those encoding the small subunit of ribulose-bisphosphate carboxylase, chlorophyll A/B binding protein, protochlorophyllide reductase, rRNA, etc. It also controls the expression of its own gene(s) in a negative feedback fashion. Mediates chloroplast avoidance movement in cytoplasm. This Physcomitrium patens (Spreading-leaved earth moss) protein is Phytochrome 1 (PHY1).